Here is a 98-residue protein sequence, read N- to C-terminus: NADH-ubiquinone oxidoreductase chain 4L (98 aa).

3 helical membrane passes run 1-21 (MHYIYINIIIAFSMSLLGALL), 29-49 (SLLCLEGMMLALFVLSTLIAL), and 61-81 (IILLVFAACEAAIGLSLLVMV).

It belongs to the complex I subunit 4L family. Core subunit of respiratory chain NADH dehydrogenase (Complex I) which is composed of 45 different subunits.

Its subcellular location is the mitochondrion inner membrane. It catalyses the reaction a ubiquinone + NADH + 5 H(+)(in) = a ubiquinol + NAD(+) + 4 H(+)(out). Its function is as follows. Core subunit of the mitochondrial membrane respiratory chain NADH dehydrogenase (Complex I) which catalyzes electron transfer from NADH through the respiratory chain, using ubiquinone as an electron acceptor. Part of the enzyme membrane arm which is embedded in the lipid bilayer and involved in proton translocation. This chain is NADH-ubiquinone oxidoreductase chain 4L (MT-ND4L), found in Procavia capensis (Rock hyrax).